The primary structure comprises 819 residues: uncharacterized protein (819 aa).

6 helical membrane-spanning segments follow: residues 45–65 (CLFY…PIVL), 100–120 (FLLG…IHIL), 135–155 (YTIG…VFGI), 158–178 (VLVP…ILLF), 252–272 (YLLG…WVFL), and 298–318 (FVLA…EYLV).

It belongs to the ycf78 family.

It localises to the plastid. It is found in the chloroplast membrane. This is an uncharacterized protein from Chlorella vulgaris (Green alga).